The chain runs to 276 residues: Rhomboid protease GlpG (276 aa).

The next 6 membrane-spanning stretches (helical) occupy residues 94–114 (GPVTWIVMLACVVVYIAMSLI), 142–162 (IFMHFSLMHILFNLLWWWYLG), 169–189 (LGSGKLIVITVISALLSGYVQ), 192–212 (FSGPWFGGLSGVVYALMGYVW), 229–249 (LIIFALLWIVASWFDWFGMSM), and 250–270 (ANGAHIAGLIVGLAMAFVDTL). Ser-201 functions as the Nucleophile in the catalytic mechanism. The active site involves His-254.

The protein belongs to the peptidase S54 family.

The protein localises to the cell inner membrane. It carries out the reaction Cleaves type-1 transmembrane domains using a catalytic dyad composed of serine and histidine that are contributed by different transmembrane domains.. Rhomboid-type serine protease that catalyzes intramembrane proteolysis. This chain is Rhomboid protease GlpG, found in Salmonella paratyphi A (strain ATCC 9150 / SARB42).